Here is a 348-residue protein sequence, read N- to C-terminus: tRNA N6-adenosine threonylcarbamoyltransferase (348 aa).

2 residues coordinate Fe cation: H120 and H124. Substrate is bound by residues 143 to 147 (LVSGG), D176, G189, and N282. Residue D310 coordinates Fe cation.

The protein belongs to the KAE1 / TsaD family. It depends on Fe(2+) as a cofactor.

The protein localises to the cytoplasm. The catalysed reaction is L-threonylcarbamoyladenylate + adenosine(37) in tRNA = N(6)-L-threonylcarbamoyladenosine(37) in tRNA + AMP + H(+). Functionally, required for the formation of a threonylcarbamoyl group on adenosine at position 37 (t(6)A37) in tRNAs that read codons beginning with adenine. Is involved in the transfer of the threonylcarbamoyl moiety of threonylcarbamoyl-AMP (TC-AMP) to the N6 group of A37, together with TsaE and TsaB. TsaD likely plays a direct catalytic role in this reaction. The chain is tRNA N6-adenosine threonylcarbamoyltransferase from Paracidovorax citrulli (strain AAC00-1) (Acidovorax citrulli).